Consider the following 173-residue polypeptide: Large ribosomal subunit protein uL16 (173 aa).

It belongs to the universal ribosomal protein uL16 family.

The chain is Large ribosomal subunit protein uL16 from Methanococcus maripaludis (strain DSM 14266 / JCM 13030 / NBRC 101832 / S2 / LL).